The chain runs to 982 residues: MEAPALEQRQSLHDSSERQQRFTSLILPNGVGCSSREEPQGSGGLLVPHNDNDIDNDLASTRTASPTTTDFSSSSSDDNSTTLETSVNYSHSSNTNTNTSCPPSPITSSSLKPAYPLPPPSTRLTTILPTDLKTPDHLIRDPRLIRLTGSHPFNVEPPLTALFEHGFLTPQNLHYVRNHGPIPSSVATPPATINKEEDDSLLNWEFTVEGLVEHPLKISVRELMDASKWDNVTYPVTLVCAGNRRKEQNVLRKSKGFSWGAGGLSTALWTGVGLSEILARAKPLTKKGGGARYVCFEGADQLPNGTYGTSVKLAWAMDPNKGIMVAHKMNGENLHPDHGRPVRVVVPGQIGGRSVKWLKRIVVTKGPSENWYHVFDNRVLPTTVGPEESGEKTEEMERVWRDERYAIYDLNVNSVICEPGHGEVVSLRGDEGAGTYRLRGYAYAGGGRRVTRLEVTLDQGKSWRLAGIEYPEDRYREAQDGEELFGGRLDVSWRESCFCWCFWDLEIPLSELRKAKDVCIRAMDESLALQPKEMYWSVLGMMNNPWFRVVIHHEGDTLRFEHPTQPMLTSDGWMDRVKKEGGNLANGFWGEKVPGAEENVVKEEPVKEISMVDEKVTRLITLEELRQHDGEEEPWFVVNGQVYNGTPFLEGHPGGAASITGAAGQDVTDEFLAIHSENAKAMMPTYHIGTLTPSAPAALKSSSTSDPALSDPSRPIFLQSKTWNSAILTFKESVSPDTKIFHFALSHPAQSIGLPVGQHLMMRLPDPAKPTESIIRAYTPISDGTLERGTLRVLVKIYYASPTEDIKGGQMTQALDALALGKAVEFKGPVGKFVYQGRGVCSVNGRERKVKRFVMVCGGSGVTPIYQVAEAVAVDDQDGTECLVLDGNRVEGDILMKSELDELVERAKPMGRCRVKYTLSRPGAEWEGLRGRLDKTMLEREVGEGDLRGETMVLLCGPEGMQNMVREVLKGMGWKDEDVLVF.

The segment at 1–128 is disordered; the sequence is MEAPALEQRQ…PPSTRLTTIL (128 aa). Residues 10–20 show a composition bias toward basic and acidic residues; that stretch reads QSLHDSSERQQ. Residues 63-110 are compositionally biased toward low complexity; that stretch reads TASPTTTDFSSSSSDDNSTTLETSVNYSHSSNTNTNTSCPPSPITSSS. Position 240 (C240) interacts with Mo-molybdopterin. The Cytochrome b5 heme-binding domain occupies 617 to 692; sequence TRLITLEELR…MPTYHIGTLT (76 aa). The heme site is built by H652 and H675. The FAD-binding FR-type domain maps to 721-836; sequence KTWNSAILTF…KGPVGKFVYQ (116 aa). FAD is bound by residues 776-779, 794-798, 810-812, S860, and T863; these read RAYT, LVKIY, and QMT. 952 to 961 lines the NADP(+) pocket; sequence MVLLCGPEGM.

This sequence belongs to the nitrate reductase family. Homodimer. It depends on FAD as a cofactor. Requires heme as cofactor. Mo-molybdopterin is required as a cofactor.

It carries out the reaction nitrite + NADP(+) + H2O = nitrate + NADPH + H(+). It functions in the pathway nitrogen metabolism; nitrate reduction (assimilation). Its function is as follows. Nitrate reductase is a key enzyme involved in the first step of nitrate assimilation in plants, fungi and bacteria. This is Nitrate reductase [NADPH] (nit-3) from Neurospora crassa (strain ATCC 24698 / 74-OR23-1A / CBS 708.71 / DSM 1257 / FGSC 987).